The sequence spans 695 residues: DNA ligase (695 aa).

NAD(+) is bound by residues 36 to 40, 85 to 86, and Glu123; these read DADYD and SL. Lys125 functions as the N6-AMP-lysine intermediate in the catalytic mechanism. NAD(+) is bound by residues Arg146, Glu182, Lys318, and Lys342. Cys436, Cys439, Cys454, and Cys460 together coordinate Zn(2+). The 79-residue stretch at 617 to 695 folds into the BRCT domain; sequence LQSGDLAGKT…EDGLKALLSQ (79 aa).

Belongs to the NAD-dependent DNA ligase family. LigA subfamily. Mg(2+) is required as a cofactor. It depends on Mn(2+) as a cofactor.

The catalysed reaction is NAD(+) + (deoxyribonucleotide)n-3'-hydroxyl + 5'-phospho-(deoxyribonucleotide)m = (deoxyribonucleotide)n+m + AMP + beta-nicotinamide D-nucleotide.. DNA ligase that catalyzes the formation of phosphodiester linkages between 5'-phosphoryl and 3'-hydroxyl groups in double-stranded DNA using NAD as a coenzyme and as the energy source for the reaction. It is essential for DNA replication and repair of damaged DNA. The polypeptide is DNA ligase (Bordetella avium (strain 197N)).